We begin with the raw amino-acid sequence, 353 residues long: Divinyl chlorophyll a/b light-harvesting protein PcbG (353 aa).

The next 6 helical transmembrane spans lie at 28 to 48 (FISS…ANTL), 64 to 84 (GLVV…NGVF), 90 to 110 (LLVV…GGML), 204 to 224 (IMGG…FHIL), 244 to 264 (FVLS…ALWC), and 308 to 328 (LTNV…FHGL).

Belongs to the PsbB/PsbC family. IsiA/Pcb subfamily. As to quaternary structure, the antenna complex consists of divinyl chlorophylls (a and b) and divinyl chlorophyll a/b binding proteins and binds more divinyl chlorophyll b than does the antenna complex from high-light-adapted Prochlorococcus. Also forms complexes with PSI, consisting of a PSI trimer with surrounded by a PcbG ring (probably with 18 subunits). Is the only subunit found in this ring under iron-replete conditions. Divinyl chlorophyll a serves as cofactor. Divinyl chlorophyll b is required as a cofactor.

It is found in the cellular thylakoid membrane. Functionally, the antenna complex functions as a light receptor, it captures and delivers excitation energy to photosystems I. The Prochlorales pcb genes are not related to higher plant LHCs. The protein is Divinyl chlorophyll a/b light-harvesting protein PcbG (pcbG) of Prochlorococcus marinus (strain SARG / CCMP1375 / SS120).